The sequence spans 463 residues: Nitrate/nitrite antiporter NarK (463 aa).

The Cytoplasmic portion of the chain corresponds to 1–37 (MSHSSAPERATGAVITDWRPEDPAFWQQRGQRIASRN). Residues 38–59 (LWISVPCLLLAFCVWMLFSAVA) form a helical membrane-spanning segment. Residues 60-73 (VNLPKVGFNFTTDQ) lie on the Periplasmic side of the membrane. Residues 74 to 95 (LFMLTALPSVSGALLRVPYSFM) form a helical membrane-spanning segment. A nitrate-binding site is contributed by arginine 89. Nitrite is bound at residue arginine 89. The Cytoplasmic segment spans residues 96 to 102 (VPIFGGR). A helical membrane pass occupies residues 103–122 (RWTAFSTGILIIPCVWLGFA). Residues 123-130 (VQDTSTPY) are Periplasmic-facing. A helical membrane pass occupies residues 131–151 (SVFIIISLLCGFAGANFASSM). Residues 152–166 (ANISFFFPKQKQGGA) lie on the Cytoplasmic side of the membrane. The helical transmembrane segment at 167–189 (LGLNGGLGNMGVSVMQLVAPLVV) threads the bilayer. Asparagine 175 serves as a coordination point for nitrate. Residues 190 to 211 (SLSIFAVFGSQGVKQPDGTELY) are Periplasmic-facing. A helical transmembrane segment spans residues 212–233 (LANASWIWVPFLAIFTIAAWFG). At 234–253 (MNDLATSKASIKEQLPVLKR) the chain is on the cytoplasmic side. The helical transmembrane segment at 254–281 (GHLWIMSLLYLATFGSFIGFSAGFAMLS) threads the bilayer. Tyrosine 263 is a binding site for nitrate. Nitrite is bound at residue tyrosine 263. The Periplasmic portion of the chain corresponds to 282–289 (KTQFPDVQ). Residues 290-312 (ILQYAFFGPFIGALARSAGGALS) traverse the membrane as a helical segment. Residues 313-316 (DRLG) are Cytoplasmic-facing. A helical transmembrane segment spans residues 317–338 (GTRVTLVNFILMAIFSGLLFLT). At 339-347 (LPTDGQGGS) the chain is on the periplasmic side. A helical membrane pass occupies residues 348 to 373 (FMAFFAVFLALFLTAGLGSGSTFQMI). The Cytoplasmic segment spans residues 374–405 (SVIFRKLTMDRVKAEGGSDERAMREAATDTAA). The helical transmembrane segment at 406 to 427 (ALGFISAIGAIGGFFIPKAFGS) threads the bilayer. Serine 411 contacts nitrate. Residues 428-435 (SLALTGSP) lie on the Periplasmic side of the membrane. The chain crosses the membrane as a helical span at residues 436–458 (VGAMKVFLIFYIACVVITWAVYG). The Cytoplasmic segment spans residues 459–463 (RHSKK).

Belongs to the major facilitator superfamily. Nitrate/nitrite porter (TC 2.A.1.8) family.

Its subcellular location is the cell inner membrane. The enzyme catalyses nitrate(in) + nitrite(out) = nitrate(out) + nitrite(in). In terms of biological role, catalyzes nitrate uptake, nitrite uptake and nitrite export across the cytoplasmic membrane. Functions as a nitrate/nitrite exchanger, and protons are unlikely to be co-transported. The sequence is that of Nitrate/nitrite antiporter NarK from Escherichia coli (strain K12).